Consider the following 342-residue polypeptide: Phenylalanine--tRNA ligase alpha subunit (342 aa).

Glutamate 260 is a binding site for Mg(2+).

Belongs to the class-II aminoacyl-tRNA synthetase family. Phe-tRNA synthetase alpha subunit type 1 subfamily. As to quaternary structure, tetramer of two alpha and two beta subunits. Mg(2+) is required as a cofactor.

It is found in the cytoplasm. The catalysed reaction is tRNA(Phe) + L-phenylalanine + ATP = L-phenylalanyl-tRNA(Phe) + AMP + diphosphate + H(+). This Mycobacterium avium (strain 104) protein is Phenylalanine--tRNA ligase alpha subunit.